We begin with the raw amino-acid sequence, 65 residues long: MAKSKDIRVTINLECINCAQNDEKRKKGISRYTTQKNRRNTPIRLELKKFCCYCNKHTIHKEIKK.

This sequence belongs to the bacterial ribosomal protein bL33 family.

It localises to the plastid. The protein localises to the chloroplast. This Marchantia polymorpha (Common liverwort) protein is Large ribosomal subunit protein bL33c (rpl33).